The primary structure comprises 151 residues: Ribosome-binding factor A (151 aa).

Residues 116-151 (DAEVARAAANARPAGDPDPYREPRPADDDDEDDEDE) form a disordered region. The segment covering 120-129 (ARAAANARPA) has biased composition (low complexity). Residues 142–151 (DDDDEDDEDE) show a composition bias toward acidic residues.

It belongs to the RbfA family. In terms of assembly, monomer. Binds 30S ribosomal subunits, but not 50S ribosomal subunits or 70S ribosomes.

The protein localises to the cytoplasm. Its function is as follows. One of several proteins that assist in the late maturation steps of the functional core of the 30S ribosomal subunit. Associates with free 30S ribosomal subunits (but not with 30S subunits that are part of 70S ribosomes or polysomes). Required for efficient processing of 16S rRNA. May interact with the 5'-terminal helix region of 16S rRNA. The protein is Ribosome-binding factor A of Thermobifida fusca (strain YX).